The following is a 433-amino-acid chain: Phosphomethylpyrimidine synthase 1 (433 aa).

Residues M95, Y124, H163, S185–G187, N226–R229, and E265 each bind substrate. Residue H269 participates in Zn(2+) binding. Y292 contacts substrate. Residue H333 coordinates Zn(2+). 3 residues coordinate [4Fe-4S] cluster: C408, C411, and C415.

The protein belongs to the ThiC family. The cofactor is [4Fe-4S] cluster.

It catalyses the reaction 5-amino-1-(5-phospho-beta-D-ribosyl)imidazole + S-adenosyl-L-methionine = 4-amino-2-methyl-5-(phosphooxymethyl)pyrimidine + CO + 5'-deoxyadenosine + formate + L-methionine + 3 H(+). It participates in cofactor biosynthesis; thiamine diphosphate biosynthesis. Its function is as follows. Catalyzes the synthesis of the hydroxymethylpyrimidine phosphate (HMP-P) moiety of thiamine from aminoimidazole ribotide (AIR) in a radical S-adenosyl-L-methionine (SAM)-dependent reaction. The chain is Phosphomethylpyrimidine synthase 1 from Methanothermobacter thermautotrophicus (strain ATCC 29096 / DSM 1053 / JCM 10044 / NBRC 100330 / Delta H) (Methanobacterium thermoautotrophicum).